Consider the following 134-residue polypeptide: DNA-binding protein inhibitor ID-2 (134 aa).

A phosphoserine mark is found at S14 and S25. In terms of domain architecture, bHLH spans 23-75; it reads SRSKTPVDDPMSLLYNMNDCYSKLKELVPSIPQNKKVTKMEILQHVIDYILDL. Residues 30–83 form an interaction with IFI204 region; the sequence is DDPMSLLYNMNDCYSKLKELVPSIPQNKKVTKMEILQHVIDYILDLQIALDSHP. The Nuclear export signal signature appears at 106–115; sequence LNTDISILSL.

Interacts with GATA4 and NKX2-5. Interacts with NR0B2. Interacts with CLOCK and BMAL1. Interacts with IFI204. Interacts with NEDD9/HEF1. Interacts with ASB4; this interaction promotes ID2 proteasomal degradation. Post-translationally, polyubiquitinated; which is favored by Ifi204 and leads to proteasomal degradation. Ubiquitinated in a ASB4-depedent manner, leading to proteasomal degradation. In terms of processing, phosphorylated in vitro by CDK1, PKA and PKC.

It localises to the cytoplasm. The protein resides in the nucleus. Its function is as follows. Transcriptional regulator (lacking a basic DNA binding domain) which negatively regulates the basic helix-loop-helix (bHLH) transcription factors by forming heterodimers and inhibiting their DNA binding and transcriptional activity. Implicated in regulating a variety of cellular processes, including cellular growth, senescence, differentiation, apoptosis, angiogenesis, and neoplastic transformation. Inhibits skeletal muscle and cardiac myocyte differentiation. Regulates the circadian clock by repressing the transcriptional activator activity of the CLOCK-BMAL1 heterodimer. Restricts the CLOCK and BMAL1 localization to the cytoplasm. Plays a role in both the input and output pathways of the circadian clock: in the input component, is involved in modulating the magnitude of photic entrainment and in the output component, contributes to the regulation of a variety of liver clock-controlled genes involved in lipid metabolism. In Mus musculus (Mouse), this protein is DNA-binding protein inhibitor ID-2 (Id2).